The sequence spans 613 residues: Chitin synthase 8 (613 aa).

Residues 1-73 are disordered; that stretch reads MAVSPTAKRK…PAPLTRPPPP (73 aa). Residue Asn17 is glycosylated (N-linked (GlcNAc...) asparagine). Residues 18–27 show a composition bias toward polar residues; it reads LSRQSSSART. Over residues 61–73 the composition is skewed to pro residues; the sequence is ESPPAPLTRPPPP. 2 helical membrane-spanning segments follow: residues 119 to 139 and 142 to 162; these read YSLI…LWNY and YWYI…IFAI. Residues Asn312, Asn421, and Asn471 are each glycosylated (N-linked (GlcNAc...) asparagine). 2 helical membrane passes run 556 to 576 and 583 to 602; these read VTTW…AIAL and IFEN…RYAA.

This sequence belongs to the chitin synthase family.

Its subcellular location is the cell membrane. It carries out the reaction [(1-&gt;4)-N-acetyl-beta-D-glucosaminyl](n) + UDP-N-acetyl-alpha-D-glucosamine = [(1-&gt;4)-N-acetyl-beta-D-glucosaminyl](n+1) + UDP + H(+). In terms of biological role, polymerizes chitin, a structural polymer of the cell wall and septum, by transferring the sugar moiety of UDP-GlcNAc to the non-reducing end of the growing chitin polymer. Plays a role in cell wall integrity. Plays a key role in pathogenicity. Likely contributes to post-penetration virulence. This is Chitin synthase 8 from Verticillium dahliae (strain VdLs.17 / ATCC MYA-4575 / FGSC 10137) (Verticillium wilt).